Reading from the N-terminus, the 250-residue chain is Proteasome subunit alpha type-4-2 (250 aa).

As to quaternary structure, the 26S proteasome consists of a 20S proteasome core and two 19S regulatory subunits. The 20S proteasome core is composed of 28 subunits that are arranged in four stacked rings, resulting in a barrel-shaped structure. The two end rings are each formed by seven alpha subunits, and the two central rings are each formed by seven beta subunits. The catalytic chamber with the active sites is on the inside of the barrel.

The protein resides in the cytoplasm. It is found in the nucleus. In terms of biological role, the proteasome is a multicatalytic proteinase complex which is characterized by its ability to cleave peptides with Arg, Phe, Tyr, Leu, and Glu adjacent to the leaving group at neutral or slightly basic pH. The proteasome has an ATP-dependent proteolytic activity. In Oryza sativa subsp. indica (Rice), this protein is Proteasome subunit alpha type-4-2.